A 331-amino-acid chain; its full sequence is Probable allantoicase (331 aa).

Belongs to the allantoicase family.

The enzyme catalyses allantoate + H2O = (S)-ureidoglycolate + urea. It participates in nitrogen metabolism; (S)-allantoin degradation; (S)-ureidoglycolate from allantoate (aminidohydrolase route): step 1/1. This Stutzerimonas stutzeri (strain A1501) (Pseudomonas stutzeri) protein is Probable allantoicase.